We begin with the raw amino-acid sequence, 258 residues long: MLFLLSPAKSLDYDTPPHVSTYTKPLFTRQSAELIDVLQTKTPQQISTLMKLSDALSGLNVARYQAWSPKFTAKNSKQAVLAFNGDVYGGLDAKTLSEQQLGWAQEHVCILSGLYGVLRPLDWMQPYRLEMGTALATGQGKNLYQFWGSQIADYLNQRAAAHTSPVIVNLASEEYFKAVDRKALKARVVSCVFEEFRAGKYKIISFMAKRARGLMVRYATEHKLLTVRKLEGFDAEGYRFDPAASQADRLVFRRRQAA.

This sequence belongs to the UPF0246 family.

The sequence is that of UPF0246 protein Bpro_3713 from Polaromonas sp. (strain JS666 / ATCC BAA-500).